The sequence spans 407 residues: Proteasome-activating nucleotidase (407 aa).

A coiled-coil region spans residues 22-67 (KEKTQIAELESKVLRLELKNKDVTRENVQIKKENEILKRELDKLRI). ATP is bound by residues 192 to 197 (GTGKTL) and His-331. Positions 405-407 (MYG) are docks into pockets in the proteasome alpha-ring to cause gate opening.

This sequence belongs to the AAA ATPase family. Homohexamer. The hexameric complex has a two-ring architecture resembling a top hat that caps the 20S proteasome core at one or both ends. Upon ATP-binding, the C-terminus of PAN interacts with the alpha-rings of the proteasome core by binding to the intersubunit pockets.

It is found in the cytoplasm. Its function is as follows. ATPase which is responsible for recognizing, binding, unfolding and translocation of substrate proteins into the archaeal 20S proteasome core particle. Is essential for opening the gate of the 20S proteasome via an interaction with its C-terminus, thereby allowing substrate entry and access to the site of proteolysis. Thus, the C-termini of the proteasomal ATPase function like a 'key in a lock' to induce gate opening and therefore regulate proteolysis. Unfolding activity requires energy from ATP hydrolysis, whereas ATP binding alone promotes ATPase-20S proteasome association which triggers gate opening, and supports translocation of unfolded substrates. In Methanococcus maripaludis (strain C7 / ATCC BAA-1331), this protein is Proteasome-activating nucleotidase.